A 527-amino-acid polypeptide reads, in one-letter code: uncharacterized protein (527 aa).

Disordered regions lie at residues 1–49 (MSSF…IKDE), 99–307 (DFNF…ATTT), 319–353 (TEINNNNSNSNNLPSIPIGNEKSKINDNQDEEDEN), and 382–419 (YINNDDGDDDDDDDENENENDSQPEEEYEENKQQQQQE). Acidic residues predominate over residues 8–17 (YDDESEEEDN). Low complexity-rich tracts occupy residues 18–44 (NNNNNNNNNNNNNNIINNNNNNNNSNN) and 99–115 (DFNFYNNNNNSNSNSNN). Over residues 141 to 150 (NEFRNPDLKN) the composition is skewed to basic and acidic residues. 2 stretches are compositionally biased toward low complexity: residues 167–178 (SSQNTTTTQQSS) and 186–222 (NNNNNNNNNNNNNNNNNNNNNNNNNNNNNNNNNNSNN). A compositionally biased stretch (basic and acidic residues) spans 229-248 (DDKSKKINENENTVNKKDNI). Over residues 283 to 296 (LRKKLLKNQPKTKK) the composition is skewed to basic residues. 2 stretches are compositionally biased toward low complexity: residues 297–307 (STTTTTTATTT) and 319–330 (TEINNNNSNSNN). A compositionally biased stretch (acidic residues) spans 386-410 (DDGDDDDDDDENENENDSQPEEEYE).

This is an uncharacterized protein from Dictyostelium discoideum (Social amoeba).